The sequence spans 142 residues: Large ribosomal subunit protein uL16 (142 aa).

The protein belongs to the universal ribosomal protein uL16 family. In terms of assembly, part of the 50S ribosomal subunit.

Functionally, binds 23S rRNA and is also seen to make contacts with the A and possibly P site tRNAs. The polypeptide is Large ribosomal subunit protein uL16 (Phenylobacterium zucineum (strain HLK1)).